The primary structure comprises 701 residues: DNA ligase 2 (701 aa).

Positions 1–10 (MSPAPQNRQP) are enriched in polar residues. Residues 1 to 21 (MSPAPQNRQPSGVPVGGQFAA) form a disordered region. NAD(+) contacts are provided by residues 64–68 (DAEFD), 111–112 (SL), and glutamate 133. The active-site N6-AMP-lysine intermediate is the lysine 135. 4 residues coordinate NAD(+): arginine 156, glutamate 189, lysine 302, and lysine 326. Cysteine 420, cysteine 423, cysteine 436, and cysteine 441 together coordinate Zn(2+). Residues 603 to 613 (KAAPAAGAKAP) show a composition bias toward low complexity. The interval 603–623 (KAAPAAGAKAPKLTKPDGKPM) is disordered. The BRCT domain occupies 615–701 (LTKPDGKPMN…FAQMVEDGEV (87 aa)).

This sequence belongs to the NAD-dependent DNA ligase family. LigA subfamily. Mg(2+) is required as a cofactor. The cofactor is Mn(2+).

The catalysed reaction is NAD(+) + (deoxyribonucleotide)n-3'-hydroxyl + 5'-phospho-(deoxyribonucleotide)m = (deoxyribonucleotide)n+m + AMP + beta-nicotinamide D-nucleotide.. Its function is as follows. DNA ligase that catalyzes the formation of phosphodiester linkages between 5'-phosphoryl and 3'-hydroxyl groups in double-stranded DNA using NAD as a coenzyme and as the energy source for the reaction. It is essential for DNA replication and repair of damaged DNA. The chain is DNA ligase 2 from Pseudarthrobacter chlorophenolicus (strain ATCC 700700 / DSM 12829 / CIP 107037 / JCM 12360 / KCTC 9906 / NCIMB 13794 / A6) (Arthrobacter chlorophenolicus).